The following is a 351-amino-acid chain: Dihydroorotate dehydrogenase (quinone) (351 aa).

Residues 61 to 65 (AGLDK) and Thr-85 each bind FMN. Lys-65 is a substrate binding site. 110 to 114 (NRMGF) lines the substrate pocket. Asn-139 and Asn-172 together coordinate FMN. Asn-172 contacts substrate. Ser-175 serves as the catalytic Nucleophile. A substrate-binding site is contributed by Asn-177. Positions 217 and 245 each coordinate FMN. Residue 246 to 247 (NT) participates in substrate binding. FMN contacts are provided by residues Gly-268, Gly-297, and 318-319 (YT).

It belongs to the dihydroorotate dehydrogenase family. Type 2 subfamily. Monomer. Requires FMN as cofactor.

The protein resides in the cell membrane. The catalysed reaction is (S)-dihydroorotate + a quinone = orotate + a quinol. It functions in the pathway pyrimidine metabolism; UMP biosynthesis via de novo pathway; orotate from (S)-dihydroorotate (quinone route): step 1/1. In terms of biological role, catalyzes the conversion of dihydroorotate to orotate with quinone as electron acceptor. The sequence is that of Dihydroorotate dehydrogenase (quinone) from Xylella fastidiosa (strain M12).